Here is a 295-residue protein sequence, read N- to C-terminus: Geranylfarnesyl diphosphate synthase (295 aa).

Isopentenyl diphosphate-binding residues include Lys-51, Arg-54, and His-83. Mg(2+) is bound by residues Asp-90 and Asp-94. Arg-99 provides a ligand contact to an all-trans-polyprenyl diphosphate. Arg-100 lines the isopentenyl diphosphate pocket. 3 residues coordinate an all-trans-polyprenyl diphosphate: Lys-174, Thr-175, and Gln-212.

The protein belongs to the FPP/GGPP synthase family. In terms of assembly, homodimer. Requires Mg(2+) as cofactor.

The catalysed reaction is isopentenyl diphosphate + (2E,6E,10E)-geranylgeranyl diphosphate = (2E,6E,10E,14E)-geranylfarnesyl diphosphate + diphosphate. Functionally, involved in biosynthesis of the polyprenyl side-chain of methanophenazine, an electron carrier utilized for methanogenesis. Catalyzes the condensation of isopentenyl pyrophosphate with the allylic pyrophosphates to yield geranylfarnesyl diphosphate (GFPP). It prefers geranylgeranyl diphosphate (GGPP) and farnesyl diphosphate (FPP) as allylic substrate. In Methanosarcina mazei (strain ATCC BAA-159 / DSM 3647 / Goe1 / Go1 / JCM 11833 / OCM 88) (Methanosarcina frisia), this protein is Geranylfarnesyl diphosphate synthase.